We begin with the raw amino-acid sequence, 306 residues long: MTQTLPTPRGSLTPNRTLADLTWLRVGGPADWLFQPADEADLAAFLAALDPAIPVFPMGVGSNLIVRDGGIRGVVIRLGRGFNAIACEGGTVTAGAAALDAHVARRAAEAGLDLTFLRTIPGSIGGAVRMNAGCYGTYVADHLVSVRAVARDGSLHEIAAADLRFGYRHSDLPEGWVVIEARFRAEPGDPAELAARMEEQLARRDASQPTKDRSAGSTFRNPAGYSSTGRADDSHELKAWTLIDAAGLRGHRLGGAQMSEKHPNFLLNAGGATAAELEALGELVRRKVRETSGHELKWEVIRVGRP.

Residues R25–G188 enclose the FAD-binding PCMH-type domain. R168 is an active-site residue. The span at E199–S214 shows a compositional bias: basic and acidic residues. Positions E199–D232 are disordered. Polar residues predominate over residues A215–G229. Residue S217 is the Proton donor of the active site. Residue E299 is part of the active site.

This sequence belongs to the MurB family. FAD is required as a cofactor.

The protein resides in the cytoplasm. It carries out the reaction UDP-N-acetyl-alpha-D-muramate + NADP(+) = UDP-N-acetyl-3-O-(1-carboxyvinyl)-alpha-D-glucosamine + NADPH + H(+). Its pathway is cell wall biogenesis; peptidoglycan biosynthesis. Cell wall formation. This is UDP-N-acetylenolpyruvoylglucosamine reductase from Paracoccus denitrificans (strain Pd 1222).